Here is a 483-residue protein sequence, read N- to C-terminus: BTB/POZ domain and ankyrin repeat-containing protein NBCL (483 aa).

Positions 25-109 (SDVTFSVEGR…LYSGQVSIVP (85 aa)) constitute a BTB domain. The C2HC NPR-type zinc finger occupies 115–129 (RPNCGERACWHTHCT). Zn(2+) contacts are provided by C118, C123, H125, and C128. ANK repeat units follow at residues 254–283 (QKIRRMRRALDSSDVELVKLMVMGEGLNLD), 284–313 (EALALPYAVENCSREVVKALLELGAADVNY), 318–347 (SGKTPLHIAAEMVSPDMVAVLLDHHADPNV), and 351–385 (DGVTPLDILRTLTSDFLFKGAVPGLTHIEPNKLRL). The tract at residues 401–437 (EGNANANSSNNNNAPCSAATPIYPPMNEDHNSSSSNA) is disordered. Residues 403–419 (NANANSSNNNNAPCSAA) are compositionally biased toward low complexity.

It belongs to the plant 'ANKYRIN-BTB/POZ' family. 'NOOT-BOP-COCH-like' (NBCL) subfamily. As to quaternary structure, homodimer. Interacts with APP1 around the plasma membrane and in the nucleus; this interaction disturbs APP1-mediated regulation of the nuclear transcription factor Y subunit (NF-YA1). In terms of tissue distribution, mainly expressed in root nodules, to a lesser extent in shoot apical meristems (SAM) and root meristems (RM), and barely in leaves, non-nodulating roots and root apical meristems (RAM).

The protein resides in the nucleus. It localises to the cytoplasm. It is found in the cell membrane. The protein operates within protein modification; protein ubiquitination. In terms of biological role, may act as a substrate-specific adapter of an E3 ubiquitin-protein ligase complex (CUL3-RBX1-BTB) which mediates the ubiquitination and subsequent proteasomal degradation of target proteins. Transcriptional co-regulator involved in the promotion of leaf and floral meristem fate and determinacy. Required for the abscission of senescent organs, probably by regulating the cell wall disorganization in abscission zones (AZs, e.g. pulvini at the base of leaves). Involved in the coordination of the symbiotic nodule developmental program; promotes the formation of root nodules by interacting directly with APP1 to modulate the expression of the nuclear transcription factor Y subunit (NF-YA1), a key nodulin. Necessary for the robust maintenance of nodule identity throughout the nodule developmental program. The polypeptide is BTB/POZ domain and ankyrin repeat-containing protein NBCL (Lotus japonicus (Lotus corniculatus var. japonicus)).